Consider the following 200-residue polypeptide: NAD(P)H dehydrogenase (quinone) (200 aa).

One can recognise a Flavodoxin-like domain in the interval 4–190 (VLVLYYSTYG…DGARFQGRLV (187 aa)). FMN contacts are provided by residues 10–15 (STYGHL) and 78–80 (TRF). Tyr-12 contacts NAD(+). Trp-98 lines the substrate pocket. Residues 113 to 119 (STATQHG) and His-134 each bind FMN.

Belongs to the WrbA family. FMN serves as cofactor.

It carries out the reaction a quinone + NADH + H(+) = a quinol + NAD(+). It catalyses the reaction a quinone + NADPH + H(+) = a quinol + NADP(+). The sequence is that of NAD(P)H dehydrogenase (quinone) from Acidovorax ebreus (strain TPSY) (Diaphorobacter sp. (strain TPSY)).